Reading from the N-terminus, the 93-residue chain is Large ribosomal subunit protein bL31 (93 aa).

The segment at 68-93 (GSADAAADEKKTDAKNNNKDNTSKED) is disordered. Basic and acidic residues predominate over residues 74-93 (ADEKKTDAKNNNKDNTSKED).

Belongs to the bacterial ribosomal protein bL31 family. Type A subfamily. In terms of assembly, part of the 50S ribosomal subunit.

Binds the 23S rRNA. This chain is Large ribosomal subunit protein bL31, found in Prochlorococcus marinus (strain MIT 9303).